The following is an 843-amino-acid chain: MAVKRFYETFHPDHYDLYIDVDRAARSFSGTSTIHGEIQEETVLVHQKYMTISKVTVDGKEVPFTFGDDFEGIKIEAGKTGEAVIAIDYSAPLTDTMMGIYPSYYQVDGVKKELIGTQFETTFAREAFPCVDEPEAKATFSLALKFDEHEGETVLANMPEDRVENGVHYFKETVRMSSYLVAFAFGEMRSLTTHTKSGVLIGVYSTQAHTEKELTFSLDIAKRAIEFYEDFYQTPYPLPQSLQLALPDFSAGAMENWGLVTYREAYLLLDPDNTTLEMKKLVATVVTHELAHQWFGDLVTMEWWDNLWLNESFANMMEYLSVDHLEPNWHIWEMFQTSEAAAALTRDATDGVQSVHVEVNDPAEIDALFDGAIVYAKGSRMLVMVRSLLGDEALRKGLKRYFDKHKFGNAAGDDLWDALSTATDLNIGEIMHTWLDQPGYPVVNAFVEDGHLKLTQKQFFIGEGKEVGRKWEIPLNANFKAPKIMSDVELDLGDYQALRAEAGHALRLNVGNNSHFIVKYDQTLMDDIMKEAKDLDPVSQLQLLQDLRLLAEGKQASYADVVPVLELFKNSESHIVNDALYTTADKLRQFAPAGSEADKNLRALYNDLSKDQVARLGWLPKAGESDEDIQTRPYVLSASLYGRNADSEKQAHEIYVEYADKLAELSADIRPYVLINEVENYGSSELTDKLIGLYQATSDPSFKMDLEAAIVKSKDEGELKKIVSWFKNAEIVKPQDLRGWFSGVLSNPAGEQLAWDWIRDEWAWLEKTVGGDMEFATFITVISRVFKTKERYDEYNAFFTDKESNMLLNREIKMDRKVIANRVDLIASEQADVNAAVAAALQK.

Residues Glu120 and 252 to 256 (GAMEN) each bind substrate. His288 lines the Zn(2+) pocket. The Proton acceptor role is filled by Glu289. 2 residues coordinate Zn(2+): His292 and Glu311.

This sequence belongs to the peptidase M1 family. As to quaternary structure, monomer. Zn(2+) is required as a cofactor.

It is found in the cytoplasm. It catalyses the reaction Release of an N-terminal amino acid, Xaa-|-Yaa- from a peptide, amide or arylamide. Xaa is preferably Ala, but may be most amino acids including Pro (slow action). When a terminal hydrophobic residue is followed by a prolyl residue, the two may be released as an intact Xaa-Pro dipeptide.. Functionally, aminopeptidase with broad substrate specificity to several peptides. In Lactobacillus delbrueckii subsp. lactis, this protein is Aminopeptidase N (pepN).